Consider the following 501-residue polypeptide: Lysine--tRNA ligase (501 aa).

The Mg(2+) site is built by E402 and E409.

This sequence belongs to the class-II aminoacyl-tRNA synthetase family. In terms of assembly, homodimer. Mg(2+) is required as a cofactor.

It is found in the cytoplasm. It catalyses the reaction tRNA(Lys) + L-lysine + ATP = L-lysyl-tRNA(Lys) + AMP + diphosphate. This Helicobacter pylori (strain Shi470) protein is Lysine--tRNA ligase.